The chain runs to 25 residues: Small ribosomal subunit protein eS32 eS32z/eS32y/eS32x/eS32w/eS32v (25 aa).

The tract at residues 1-25 (MRAKWKKKRMRRLKRKRRKMRQRSK) is disordered.

Belongs to the eukaryotic ribosomal protein eS32 family. Component of the small ribosomal subunit (SSU).

In Arabidopsis thaliana (Mouse-ear cress), this protein is Small ribosomal subunit protein eS32 eS32z/eS32y/eS32x/eS32w/eS32v (RPL41A).